The following is a 38-amino-acid chain: Large ribosomal subunit protein bL36 (38 aa).

The protein belongs to the bacterial ribosomal protein bL36 family.

In Phytoplasma mali (strain AT), this protein is Large ribosomal subunit protein bL36.